A 333-amino-acid polypeptide reads, in one-letter code: Coiled-coil domain-containing protein 68 (333 aa).

Coiled coils occupy residues 86–120 (LDLLMENMRRKDQQLLEMNRENEVLQIKLEASREA) and 160–302 (EKEQ…HWTE).

In terms of assembly, interacts with CEP170.

It localises to the cytoplasm. Its subcellular location is the cytoskeleton. The protein resides in the microtubule organizing center. The protein localises to the centrosome. It is found in the centriole. Centriolar protein required for centriole subdistal appendage assembly and microtubule anchoring in interphase cells. Together with CCDC120, cooperate with subdistal appendage components ODF2, NIN and CEP170 for hierarchical subdistal appendage assembly. This Mus musculus (Mouse) protein is Coiled-coil domain-containing protein 68 (Ccdc68).